The primary structure comprises 133 residues: Late embryogenesis abundant protein B19.3 (133 aa).

Positions 1 to 133 (MASGQQERSE…IDESKFKTKS (133 aa)) are disordered. Basic and acidic residues-rich tracts occupy residues 7–19 (ERSELDRMAREGE), 32–102 (EAQE…EMGR), and 113–133 (GGERAAREGIDIDESKFKTKS). Repeat copies occupy residues 24-43 (GGTGGKTLEAQEHLAEGRSR), 44-63 (GGQTRKDQLGEEGYREMGHK), and 64-83 (GGETRKEQLGEEGYREMGHK). The interval 24 to 83 (GGTGGKTLEAQEHLAEGRSRGGQTRKDQLGEEGYREMGHKGGETRKEQLGEEGYREMGHK) is 3 X 20 AA tandem repeats.

The protein belongs to the small hydrophilic plant seed protein family.

Functionally, lea proteins are late embryonic proteins abundant in higher plant seed embryos. The protein is Late embryogenesis abundant protein B19.3 (B19.3) of Hordeum vulgare (Barley).